We begin with the raw amino-acid sequence, 421 residues long: Outer capsid protein P8 (421 aa).

This sequence belongs to the phytoreovirus outer capsid protein P8 family. In terms of assembly, homotrimer. Homomultimer. Interacts with host peroxisomal glycolate oxidase (GOX). This interaction mediates its relocation to virus factories peripheral to host peroxisomes.

The protein resides in the virion. It is found in the host cytoplasm. Capsid protein which self-assembles to form the outer icosahedral capsid with a T=13 symmetry, about 70 nm in diameter and consisting of 780 molecules capsid proteins. This Rice dwarf virus (isolate S) (RDV) protein is Outer capsid protein P8 (S8).